The chain runs to 402 residues: Phosphoglycerate kinase (402 aa).

Substrate contacts are provided by residues 24-26, Arg-39, 62-65, Arg-121, and Arg-161; these read DLN and HLGR. ATP is bound by residues Lys-211, Gly-299, Glu-330, and 359 to 362; that span reads GGDS.

This sequence belongs to the phosphoglycerate kinase family. Monomer.

The protein resides in the cytoplasm. The catalysed reaction is (2R)-3-phosphoglycerate + ATP = (2R)-3-phospho-glyceroyl phosphate + ADP. Its pathway is carbohydrate degradation; glycolysis; pyruvate from D-glyceraldehyde 3-phosphate: step 2/5. The protein is Phosphoglycerate kinase of Corynebacterium urealyticum (strain ATCC 43042 / DSM 7109).